Here is a 308-residue protein sequence, read N- to C-terminus: Olfactory receptor 5H8 (308 aa).

At 1 to 28 the chain is on the extracellular side; it reads MDDENATLLTEFVLTGLTYQSEWKIPLF. The chain crosses the membrane as a helical span at residues 29 to 49; it reads LAFLVIYLITIMANLGLIAVI. Residues 50 to 56 lie on the Cytoplasmic side of the membrane; that stretch reads WKDSHLH. Residues 57-77 traverse the membrane as a helical segment; the sequence is IPMYLFLGSLAFVDAWLSSSV. The Extracellular portion of the chain corresponds to 78 to 98; it reads TPKMLISFLAKSMIISVSECK. A disulfide bridge links cysteine 97 with cysteine 179. The helical transmembrane segment at 99-119 threads the bilayer; sequence IQFFSFGISGTTECFLLATMA. Topologically, residues 120-133 are cytoplasmic; sequence YDRYVAICKPLLYP. The chain crosses the membrane as a helical span at residues 134–154; it reads VIMTNGLCIWLLVLSFIGGFL. The Extracellular segment spans residues 155–195; it reads HALIHEGILFRLTFCNSNIIHHFYCDIIPLLKISCTDPSIN. Residues 196-216 form a helical membrane-spanning segment; that stretch reads FLMLFILSGSIQVFTILTVLV. Topologically, residues 217–238 are cytoplasmic; sequence SYTFVLFTILKKKAKDIRKAFS. A helical membrane pass occupies residues 239-259; that stretch reads TCGAHLLSVSLYYGPLLFMYV. Residues 260–270 are Extracellular-facing; it reads HPASPQADDQD. Residues 271 to 291 traverse the membrane as a helical segment; sequence MVESLFYTVIIPFLNPIIYSL. Topologically, residues 292–308 are cytoplasmic; the sequence is RNKQVIDSLTKTLKGNV.

The protein belongs to the G-protein coupled receptor 1 family.

It localises to the cell membrane. In terms of biological role, odorant receptor. The chain is Olfactory receptor 5H8 from Homo sapiens (Human).